The chain runs to 309 residues: MKQKILVLGGPTAVGKTELSIKLAEKLNGEIISADSMQIYKNMDIGSAKVTKEEMRDINHHMIDIVSPEEEFSVADFKNIGEKAIKEIIAKEKLPMIVGGTGLYINSLTCNVTFTESEKDDEYRTYLESLAEANGNNYVHEMLKEIDEISYRDIHPNNRKRVIRALEVFKISGKPFSSYNVGDDFYKTDYDVFYYVLTMDREKLYNRINKRVDIMIENGLIDECIELKKLGYTSSMQSMQGIGYKEILYYLDKKISLDEAVNLIKQGSRNYAKRQLTWFRRDPRCTFLDKDVLSDEEILSKIIDDITNN.

An ATP-binding site is contributed by 10-17 (GPTAVGKT). 12 to 17 (TAVGKT) provides a ligand contact to substrate. Residues 35-38 (DSMQ) are interaction with substrate tRNA.

This sequence belongs to the IPP transferase family. As to quaternary structure, monomer. Requires Mg(2+) as cofactor.

It catalyses the reaction adenosine(37) in tRNA + dimethylallyl diphosphate = N(6)-dimethylallyladenosine(37) in tRNA + diphosphate. In terms of biological role, catalyzes the transfer of a dimethylallyl group onto the adenine at position 37 in tRNAs that read codons beginning with uridine, leading to the formation of N6-(dimethylallyl)adenosine (i(6)A). This Clostridium botulinum (strain Alaska E43 / Type E3) protein is tRNA dimethylallyltransferase.